The primary structure comprises 368 residues: tRNA-specific 2-thiouridylase MnmA (368 aa).

ATP contacts are provided by residues Gly11–Ser18 and Met37. The tract at residues Asn97–Asp99 is interaction with target base in tRNA. Residue Cys102 is the Nucleophile of the active site. Cysteines 102 and 199 form a disulfide. An ATP-binding site is contributed by Gly127. The segment at Lys149–Gln151 is interaction with tRNA. The active-site Cysteine persulfide intermediate is Cys199. Residues Arg311 to Tyr312 are interaction with tRNA.

The protein belongs to the MnmA/TRMU family. In terms of assembly, interacts with TusE.

Its subcellular location is the cytoplasm. It carries out the reaction S-sulfanyl-L-cysteinyl-[protein] + uridine(34) in tRNA + AH2 + ATP = 2-thiouridine(34) in tRNA + L-cysteinyl-[protein] + A + AMP + diphosphate + H(+). Catalyzes the 2-thiolation of uridine at the wobble position (U34) of tRNA(Lys), tRNA(Glu) and tRNA(Gln), leading to the formation of s(2)U34, the first step of tRNA-mnm(5)s(2)U34 synthesis. Sulfur is provided by IscS, via a sulfur-relay system. Binds ATP and its substrate tRNAs. In Shigella boydii serotype 18 (strain CDC 3083-94 / BS512), this protein is tRNA-specific 2-thiouridylase MnmA.